Here is a 938-residue protein sequence, read N- to C-terminus: Nitrate reductase (938 aa).

In terms of domain architecture, 4Fe-4S Mo/W bis-MGD-type spans 1–64 (MSVVQSSCAY…RLLDSLAQPN (64 aa)). 4 residues coordinate [4Fe-4S] cluster: C8, C11, C15, and C50.

This sequence belongs to the prokaryotic molybdopterin-containing oxidoreductase family. NasA/NapA/NarB subfamily. It depends on [4Fe-4S] cluster as a cofactor. Mo-bis(molybdopterin guanine dinucleotide) serves as cofactor.

The protein localises to the cytoplasm. The catalysed reaction is nitrate + a quinol = a quinone + nitrite + H2O. Its pathway is nitrogen metabolism; nitrate reduction (assimilation). In terms of biological role, nitrate reductase is a key enzyme involved in the first step of nitrate assimilation in plants, fungi and bacteria. The protein is Nitrate reductase of Shewanella frigidimarina (strain NCIMB 400).